Consider the following 412-residue polypeptide: Peptidase T (412 aa).

His-78 lines the Zn(2+) pocket. Asp-80 is an active-site residue. Zn(2+) is bound at residue Asp-140. Residue Glu-173 is the Proton acceptor of the active site. Glu-174, Asp-196, and His-379 together coordinate Zn(2+).

The protein belongs to the peptidase M20B family. Requires Zn(2+) as cofactor.

The protein resides in the cytoplasm. The enzyme catalyses Release of the N-terminal residue from a tripeptide.. Cleaves the N-terminal amino acid of tripeptides. The chain is Peptidase T from Edwardsiella ictaluri (strain 93-146).